We begin with the raw amino-acid sequence, 597 residues long: MFS-type transporter FPY5 (597 aa).

A disordered region spans residues 1–55 (MSETTGLPLKHLQGSPPGTPVNTNNESNEASPDDGCRLPDTVTEAEASSDNHGSV). Polar residues-rich tracts occupy residues 20 to 30 (PVNTNNESNEA) and 46 to 55 (EASSDNHGSV). Residue Asn25 is glycosylated (N-linked (GlcNAc...) asparagine). A glycan (N-linked (GlcNAc...) asparagine) is linked at Asn72. The next 9 membrane-spanning stretches (helical) occupy residues 94–114 (LSLL…VSIV), 120–140 (FNMA…FLII), 147–167 (IFGC…FSMA), 183–203 (FQGM…PLMV), 214–234 (IMSS…GAIT), 241–261 (WVFY…AFSV), 286–306 (VDFV…FALE), 316–336 (SGAI…FIAW), and 360–380 (FVMG…AALI). A glycan (N-linked (GlcNAc...) asparagine) is linked at Asn390. 5 helical membrane-spanning segments follow: residues 402–422 (LPLL…VSKL), 424–444 (VPPL…VGLY), 463–483 (IMGL…PLVV), 498–518 (IRVL…INHI), and 562–582 (EQMR…VLLV).

This sequence belongs to the major facilitator superfamily. TCR/Tet family.

It is found in the membrane. It participates in secondary metabolite biosynthesis. Its function is as follows. MFS-type transporter; part of the gene cluster that mediates the biosynthesis of the gamma-pyrones fusapyrone (FPY) and deoxyfusapyrone (dFPY). In Fusarium mangiferae (Mango malformation disease fungus), this protein is MFS-type transporter FPY5.